Reading from the N-terminus, the 496-residue chain is 4-O-methyl-glucuronoyl methylesterase 1 (496 aa).

The signal sequence occupies residues 1 to 19 (MKSTVASALLVLAGTAVQA). Positions 20-55 (QSGPWQQCGGIGWQGPFTCVSGHTCQVLNDWYHQCV) constitute a CBM1 domain. The segment at 57 to 151 (GGGPSPPPTS…RLPDPFTFHN (95 aa)) is disordered. Residues 59–125 (GPSPPPTSPP…SPPPTSPPPS (67 aa)) are compositionally biased toward pro residues. 3 disulfides stabilise this stretch: cysteine 129/cysteine 163, cysteine 307/cysteine 443, and cysteine 339/cysteine 415. Positions 306-311 (GCSRNG) match the GXSYXG catalytic site motif motif. The Nucleophile role is filled by serine 308. Substrate-binding residues include lysine 312, glutamine 354, glutamate 362, and tryptophan 406. Residue histidine 442 is the Proton donor/acceptor of the active site.

It belongs to the carbohydrate esterase 15 (CE15) family.

It localises to the secreted. The enzyme catalyses a 4-O-methyl-alpha-D-glucuronosyl ester derivative + H2O = 4-O-methyl-alpha-D-glucuronate derivative + an alcohol + H(+). Glucuronoyl esterase which may play a significant role in biomass degradation, as it is considered to disconnect hemicellulose from lignin through the hydrolysis of the ester bond between 4-O-methyl-D-glucuronic acid residues of glucuronoxylans and aromatic alcohols of lignin. Cleaves native lignin-carbohydrate (LC) ester bonds from LC complex preparations of spruce (softwood) and birch (hardwood), containing mainly hemicelluloses with partially acetylated glucomannans in spruce and partially acetylated xylan in birch. Can hydrolyze benzyl glucuronic acid (BnGlcA), allyl glucuronic acid (allylGlcA) and to a lower degree methyl glucuronic acid (MeGlcA) in vitro. In Sodiomyces alcalophilus (Acremonium alcalophilum), this protein is 4-O-methyl-glucuronoyl methylesterase 1.